The primary structure comprises 236 residues: Ribose-5-phosphate isomerase A (236 aa).

Substrate is bound by residues 28–31 (TGST), 83–86 (DGAD), and 96–99 (KGGG). The Proton acceptor role is filled by E105. Residue K123 participates in substrate binding.

Belongs to the ribose 5-phosphate isomerase family. As to quaternary structure, homodimer.

It catalyses the reaction aldehydo-D-ribose 5-phosphate = D-ribulose 5-phosphate. It participates in carbohydrate degradation; pentose phosphate pathway; D-ribose 5-phosphate from D-ribulose 5-phosphate (non-oxidative stage): step 1/1. Catalyzes the reversible conversion of ribose-5-phosphate to ribulose 5-phosphate. The polypeptide is Ribose-5-phosphate isomerase A (Methylorubrum extorquens (strain CM4 / NCIMB 13688) (Methylobacterium extorquens)).